Reading from the N-terminus, the 453-residue chain is mRNA cleavage and polyadenylation factor CLP1 (453 aa).

Residues Glu31, Lys70, and 146–151 contribute to the ATP site; that span reads NSGKTS.

It belongs to the Clp1 family. Clp1 subfamily. Component of a pre-mRNA cleavage factor complex. Interacts directly with PCF11.

It is found in the nucleus. Required for endonucleolytic cleavage during polyadenylation-dependent pre-mRNA 3'-end formation. In Scheffersomyces stipitis (strain ATCC 58785 / CBS 6054 / NBRC 10063 / NRRL Y-11545) (Yeast), this protein is mRNA cleavage and polyadenylation factor CLP1.